The following is a 359-amino-acid chain: WAT1-related protein At4g28040 (359 aa).

Transmembrane regions (helical) follow at residues 10–30, 37–57, 66–86, 103–123, 133–153, 170–190, 204–224, 240–260, 266–286, and 292–312; these read LALVMLQFTSAGVALFTKAAF, TVFVVYRQAIATLFICPISFI, PSLGVRGFWWVALTAVIGVTV, ACAMTNLIPAVTFIISIIVGF, SVAKVIGTGVCVGGAMAMTFL, WLLGCFFLLISTFAWSLWLIL, TSACTCFIATIASFLVALALG, SCCIYSGFQLAISFFLQAWIV, VFSALFNPLSAVIVTFFGALY, and YLGSLLGALAIILGLYIVLWG. An EamA 1 domain is found at 18–131; it reads TSAGVALFTK…GFESIKRRSM (114 aa). Positions 199–310 constitute an EamA 2 domain; the sequence is PDHLYTSACT…AIILGLYIVL (112 aa).

It belongs to the drug/metabolite transporter (DMT) superfamily. Plant drug/metabolite exporter (P-DME) (TC 2.A.7.4) family.

It localises to the membrane. The sequence is that of WAT1-related protein At4g28040 from Arabidopsis thaliana (Mouse-ear cress).